The sequence spans 398 residues: Lysophospholipid acyltransferase LPEAT1 (398 aa).

Residues M1–L24 are disordered. At S28 the chain carries Phosphoserine. A helical membrane pass occupies residues L66 to L86. The disordered stretch occupies residues R158–E185. The segment covering D163–N174 has biased composition (polar residues). The short motif at H194–D199 is the HXXXXD motif element.

Belongs to the 1-acyl-sn-glycerol-3-phosphate acyltransferase family.

The protein localises to the endoplasmic reticulum membrane. The catalysed reaction is a 1-acyl-sn-glycero-3-phosphoethanolamine + an acyl-CoA = a 1,2-diacyl-sn-glycero-3-phosphoethanolamine + CoA. It catalyses the reaction a 1-acyl-sn-glycero-3-phosphate + an acyl-CoA = a 1,2-diacyl-sn-glycero-3-phosphate + CoA. The enzyme catalyses a 1-acyl-sn-glycero-3-phosphocholine + an acyl-CoA = a 1,2-diacyl-sn-glycero-3-phosphocholine + CoA. It carries out the reaction a 1-acyl-sn-glycero-3-phospho-L-serine + an acyl-CoA = a 1,2-diacyl-sn-glycero-3-phospho-L-serine + CoA. Its pathway is lipid metabolism; phospholipid metabolism. Possesses acyl-CoA-dependent lysophospholipid acyltransferase activity with a subset of lysophospholipids as substrates. Exhibits strong acylation activity on lysophosphatidylethanolamine (LPE) and lysophosphatidate (LPA), and lower activity on lysophosphatidylcholine (LPC) and lysophosphatidylserine (LPS). Exhibits acylation activity on both LPE and LPC. Has a preference for 18:1-LPE over 16:0-LPE as acceptor. Palmitoyl-CoA (16:0-CoA) is a better acyl donor than oleoyl-CoA (18:1-CoA). Among several different acyl-CoA species the best acyl donor is palmitoyl-CoA (16:0-CoA). Activity is calcium-independent. Its activity is essential for maintaining adequate levels of phosphatidylethanolamine (PE), LPE and LPC in the cells, which is crucial for plant growth regulation. The sequence is that of Lysophospholipid acyltransferase LPEAT1 from Arabidopsis thaliana (Mouse-ear cress).